The sequence spans 376 residues: N-acetyldiaminopimelate deacetylase (376 aa).

Aspartate 70 is an active-site residue. Glutamate 129 acts as the Proton acceptor in catalysis.

This sequence belongs to the peptidase M20A family. N-acetyldiaminopimelate deacetylase subfamily.

The catalysed reaction is N-acetyl-(2S,6S)-2,6-diaminopimelate + H2O = (2S,6S)-2,6-diaminopimelate + acetate. Its pathway is amino-acid biosynthesis; L-lysine biosynthesis via DAP pathway; LL-2,6-diaminopimelate from (S)-tetrahydrodipicolinate (acetylase route): step 3/3. Functionally, catalyzes the conversion of N-acetyl-diaminopimelate to diaminopimelate and acetate. The chain is N-acetyldiaminopimelate deacetylase from Geobacillus sp. (strain WCH70).